The sequence spans 397 residues: Elongation factor Tu (397 aa).

The 198-residue stretch at 10 to 207 (KPHVNIGTIG…ACDSYIPEPQ (198 aa)) folds into the tr-type G domain. The G1 stretch occupies residues 19–26 (GHIDHGKT). Residue 19–26 (GHIDHGKT) coordinates GTP. Threonine 26 is a binding site for Mg(2+). The tract at residues 60-64 (GITIA) is G2. The tract at residues 81-84 (DCPG) is G3. GTP contacts are provided by residues 81–85 (DCPGH) and 136–139 (NKCD). The G4 stretch occupies residues 136–139 (NKCD). A G5 region spans residues 174-176 (SAL).

The protein belongs to the TRAFAC class translation factor GTPase superfamily. Classic translation factor GTPase family. EF-Tu/EF-1A subfamily. As to quaternary structure, monomer.

It is found in the cytoplasm. It catalyses the reaction GTP + H2O = GDP + phosphate + H(+). In terms of biological role, GTP hydrolase that promotes the GTP-dependent binding of aminoacyl-tRNA to the A-site of ribosomes during protein biosynthesis. The chain is Elongation factor Tu from Nitratidesulfovibrio vulgaris (strain ATCC 29579 / DSM 644 / CCUG 34227 / NCIMB 8303 / VKM B-1760 / Hildenborough) (Desulfovibrio vulgaris).